The following is a 144-amino-acid chain: 3-dehydroquinate dehydratase (144 aa).

The active-site Proton acceptor is the tyrosine 24. Substrate-binding residues include asparagine 76, histidine 82, and aspartate 89. Histidine 102 serves as the catalytic Proton donor. Substrate is bound by residues leucine 103–serine 104 and arginine 113.

This sequence belongs to the type-II 3-dehydroquinase family. In terms of assembly, homododecamer.

The enzyme catalyses 3-dehydroquinate = 3-dehydroshikimate + H2O. Its pathway is metabolic intermediate biosynthesis; chorismate biosynthesis; chorismate from D-erythrose 4-phosphate and phosphoenolpyruvate: step 3/7. Catalyzes a trans-dehydration via an enolate intermediate. This is 3-dehydroquinate dehydratase from Bordetella bronchiseptica (strain ATCC BAA-588 / NCTC 13252 / RB50) (Alcaligenes bronchisepticus).